Consider the following 405-residue polypeptide: Cytoplasmic tRNA 2-thiolation protein 2 (405 aa).

The protein belongs to the CTU2/NCS2 family.

Its subcellular location is the cytoplasm. It functions in the pathway tRNA modification; 5-methoxycarbonylmethyl-2-thiouridine-tRNA biosynthesis. In terms of biological role, plays a central role in 2-thiolation of mcm(5)S(2)U at tRNA wobble positions of tRNA(Lys), tRNA(Glu) and tRNA(Gln). May act by forming a heterodimer with NCS6/CTU1 that ligates sulfur from thiocarboxylated URM1 onto the uridine of tRNAs at wobble position. In Drosophila simulans (Fruit fly), this protein is Cytoplasmic tRNA 2-thiolation protein 2.